Here is a 283-residue protein sequence, read N- to C-terminus: MRDNLFIYLQYLLPHTLTSRLVSKLADSENKIIKNHLIKLAIKKFNINLVEAKETDISKYKSFNDFFIRELKDDLRPISNDKNVISSPADGVLSQFGTITDNSLIQAKGKLFSLESLIASSSTTSFTKFATIYLSPKDYHRVHMPIDGKLTKMVYIPGKLFSVNKITTSKVDNLFAKNERLICYFDTIIGEIAVIFVGALLVAGIETVWHGKIAPNYYKDIQTWDYNSAKFNIKFNKGDILGWFNFGSTVIILTSGNNVSFKFEENKNNIKIQVNQDLALITE.

Catalysis depends on charge relay system; for autoendoproteolytic cleavage activity residues Asp-90, His-143, and Ser-248. Ser-248 serves as the catalytic Schiff-base intermediate with substrate; via pyruvic acid; for decarboxylase activity. Ser-248 carries the post-translational modification Pyruvic acid (Ser); by autocatalysis.

The protein belongs to the phosphatidylserine decarboxylase family. PSD-B subfamily. Prokaryotic type I sub-subfamily. Heterodimer of a large membrane-associated beta subunit and a small pyruvoyl-containing alpha subunit. The cofactor is pyruvate. Is synthesized initially as an inactive proenzyme. Formation of the active enzyme involves a self-maturation process in which the active site pyruvoyl group is generated from an internal serine residue via an autocatalytic post-translational modification. Two non-identical subunits are generated from the proenzyme in this reaction, and the pyruvate is formed at the N-terminus of the alpha chain, which is derived from the carboxyl end of the proenzyme. The autoendoproteolytic cleavage occurs by a canonical serine protease mechanism, in which the side chain hydroxyl group of the serine supplies its oxygen atom to form the C-terminus of the beta chain, while the remainder of the serine residue undergoes an oxidative deamination to produce ammonia and the pyruvoyl prosthetic group on the alpha chain. During this reaction, the Ser that is part of the protease active site of the proenzyme becomes the pyruvoyl prosthetic group, which constitutes an essential element of the active site of the mature decarboxylase.

It is found in the cell membrane. The catalysed reaction is a 1,2-diacyl-sn-glycero-3-phospho-L-serine + H(+) = a 1,2-diacyl-sn-glycero-3-phosphoethanolamine + CO2. The protein operates within phospholipid metabolism; phosphatidylethanolamine biosynthesis; phosphatidylethanolamine from CDP-diacylglycerol: step 2/2. Functionally, catalyzes the formation of phosphatidylethanolamine (PtdEtn) from phosphatidylserine (PtdSer). The sequence is that of Phosphatidylserine decarboxylase proenzyme from Francisella tularensis subsp. holarctica (strain OSU18).